A 206-amino-acid polypeptide reads, in one-letter code: uncharacterized protein (206 aa).

A helical membrane pass occupies residues 4–24; the sequence is LLVVIAVALFIAAIVVLVVAI.

The protein localises to the membrane. This is an uncharacterized protein from Mycobacterium tuberculosis (strain CDC 1551 / Oshkosh).